A 158-amino-acid polypeptide reads, in one-letter code: NAD(P)H-quinone oxidoreductase subunit J, chloroplastic (158 aa).

Belongs to the complex I 30 kDa subunit family. NDH is composed of at least 16 different subunits, 5 of which are encoded in the nucleus.

The protein resides in the plastid. It localises to the chloroplast thylakoid membrane. It carries out the reaction a plastoquinone + NADH + (n+1) H(+)(in) = a plastoquinol + NAD(+) + n H(+)(out). The enzyme catalyses a plastoquinone + NADPH + (n+1) H(+)(in) = a plastoquinol + NADP(+) + n H(+)(out). Functionally, NDH shuttles electrons from NAD(P)H:plastoquinone, via FMN and iron-sulfur (Fe-S) centers, to quinones in the photosynthetic chain and possibly in a chloroplast respiratory chain. The immediate electron acceptor for the enzyme in this species is believed to be plastoquinone. Couples the redox reaction to proton translocation, and thus conserves the redox energy in a proton gradient. This Nuphar advena (Common spatterdock) protein is NAD(P)H-quinone oxidoreductase subunit J, chloroplastic.